The chain runs to 244 residues: Uridylate kinase (244 aa).

Residue 17–20 (KVSG) coordinates ATP. Positions 25-30 (GEKGFG) are involved in allosteric activation by GTP. Position 59 (Gly59) interacts with UMP. Gly60 and Arg64 together coordinate ATP. Residues Asp80 and 141–148 (VGNPFFTT) each bind UMP. Residues Thr168, Gln169, Tyr174, and Asp177 each contribute to the ATP site.

Belongs to the UMP kinase family. Homohexamer.

It localises to the cytoplasm. It catalyses the reaction UMP + ATP = UDP + ADP. It participates in pyrimidine metabolism; CTP biosynthesis via de novo pathway; UDP from UMP (UMPK route): step 1/1. Allosterically activated by GTP. Inhibited by UTP. Catalyzes the reversible phosphorylation of UMP to UDP. The protein is Uridylate kinase of Ehrlichia canis (strain Jake).